Consider the following 85-residue polypeptide: uncharacterized protein (85 aa).

The protein belongs to the SF3B5 family.

This is an uncharacterized protein from Schizosaccharomyces pombe (strain 972 / ATCC 24843) (Fission yeast).